Here is a 307-residue protein sequence, read N- to C-terminus: MTEQATKPRNSSHLIGGFFGGLTSAVALQPLDLLKTRIQQDKKATLWKNLKEIDSPLQLWRGTLPSALRTSIGSALYLSCLNLMRSSLAKRRNAVPSLTNDSNIVYNKSSSLPRLTMYENLLTGAFARGLVGYITMPITVIKVRYESTLYNYSSLKEAITHIYTKEGLFGFFRGFGATCLRDAPYAGLYVLLYEKSKQLLPMVLPSRFIHYNPEGGFTTYTSTTVNTTSAVLSASLATTVTAPFDTIKTRMQLEPSKFTNSFNTFTSIVKNENVLKLFSGLSMRLARKAFSAGIAWGIYEELVKRFM.

Solcar repeat units follow at residues 8–87 (PRNS…MRSS), 115–199 (LTMY…SKQL), and 221–305 (TSTT…LVKR). The next 6 helical transmembrane spans lie at 14 to 39 (LIGG…TRIQ), 62 to 88 (GTLP…RSSL), 121 to 146 (LLTG…VRYE), 174 to 197 (GFGA…EKSK), 225 to 251 (VNTT…KTRM), and 280 to 298 (GLSM…AWGI).

The protein belongs to the mitochondrial carrier (TC 2.A.29) family. SLC25A38 subfamily.

Its subcellular location is the mitochondrion. The protein resides in the mitochondrion inner membrane. The enzyme catalyses glycine(in) = glycine(out). Its function is as follows. Mitochondrial glycine transporter that imports glycine into the mitochondrial matrix. Plays an important role in providing glycine for the first enzymatic step in heme biosynthesis, the condensation of glycine with succinyl-CoA to produce 5-aminolevulinate (ALA) in the mitochondrial matrix. This is Mitochondrial glycine transporter from Saccharomyces cerevisiae (strain ATCC 204508 / S288c) (Baker's yeast).